The primary structure comprises 657 residues: UvrABC system protein B (657 aa).

One can recognise a Helicase ATP-binding domain in the interval 29-416; the sequence is KLAEFQTNEQ…LSHNNVVEQL (388 aa). 42–49 contributes to the ATP binding site; it reads GATGTGKT. Residues 95-118 carry the Beta-hairpin motif; it reads YFDFYQPEAYLPAKGVYIEKSATV. The 163-residue stretch at 435 to 597 folds into the Helicase C-terminal domain; it reads QVEDLVSEII…KTPMTVQKPI (163 aa). The UVR domain maps to 615–650; it reads AALIKQLTKEMKQAAANQNYELAIEIRDSIFELEKQ.

This sequence belongs to the UvrB family. Forms a heterotetramer with UvrA during the search for lesions. Interacts with UvrC in an incision complex.

It localises to the cytoplasm. In terms of biological role, the UvrABC repair system catalyzes the recognition and processing of DNA lesions. A damage recognition complex composed of 2 UvrA and 2 UvrB subunits scans DNA for abnormalities. Upon binding of the UvrA(2)B(2) complex to a putative damaged site, the DNA wraps around one UvrB monomer. DNA wrap is dependent on ATP binding by UvrB and probably causes local melting of the DNA helix, facilitating insertion of UvrB beta-hairpin between the DNA strands. Then UvrB probes one DNA strand for the presence of a lesion. If a lesion is found the UvrA subunits dissociate and the UvrB-DNA preincision complex is formed. This complex is subsequently bound by UvrC and the second UvrB is released. If no lesion is found, the DNA wraps around the other UvrB subunit that will check the other stand for damage. In Mycoplasma pneumoniae (strain ATCC 29342 / M129 / Subtype 1) (Mycoplasmoides pneumoniae), this protein is UvrABC system protein B.